A 584-amino-acid chain; its full sequence is Delta 8-(E)-sphingolipid desaturase (584 aa).

A Cytochrome b5 heme-binding domain is found at 7–82 (KKIFTRSQII…FTRFKIGEIE (76 aa)). Residues His42 and His65 each contribute to the heme site. The disordered stretch occupies residues 109–134 (NKNTSNKKTLDSKLDNDSSNSTSDLE). A helical transmembrane segment spans residues 261–281 (LFLYSLSFLKINQLFLSAVFM). The short motif at 293–297 (HDAGH) is the Histidine box-1 element. The helical transmembrane segment at 306-326 (IDNIFGMLIADWFGGLSLGWW) threads the bilayer. The Histidine box-2 motif lies at 330–334 (HNVHH). 3 consecutive transmembrane segments (helical) span residues 386–403 (YLYY…YRLS), 423–443 (YFEF…LVFK), and 455–475 (VMVS…SHFA). The Histidine box-3 motif lies at 514 to 518 (QAIHH).

This sequence belongs to the fatty acid desaturase type 1 family.

The protein resides in the membrane. It catalyses the reaction an N-acylsphing-4-enine + 2 Fe(II)-[cytochrome b5] + O2 + 2 H(+) = a (4E,8E)-4-sphinga-4,8-dienine ceramide + 2 Fe(III)-[cytochrome b5] + 2 H2O. It participates in lipid metabolism; sphingolipid metabolism. In terms of biological role, delta(8)-fatty-acid desaturase which introduces a double bond at the 8-position in the long-chain base (LCB) of ceramides. Required for the formation of the di-unsaturated sphingoid base (E,E)-sphinga-4,8-dienine during glucosylceramide (GluCer) biosynthesis. The sequence is that of Delta 8-(E)-sphingolipid desaturase from Candida albicans (strain SC5314 / ATCC MYA-2876) (Yeast).